The following is a 350-amino-acid chain: Magnesium-chelatase 38 kDa subunit (350 aa).

52-59 (GDRGTGKS) is a binding site for ATP.

It belongs to the Mg-chelatase subunits D/I family.

It catalyses the reaction protoporphyrin IX + Mg(2+) + ATP + H2O = Mg-protoporphyrin IX + ADP + phosphate + 3 H(+). It functions in the pathway porphyrin-containing compound metabolism; bacteriochlorophyll biosynthesis. In terms of biological role, involved in bacteriochlorophyll biosynthesis; introduces a magnesium ion into protoporphyrin IX to yield Mg-protoporphyrin IX. This chain is Magnesium-chelatase 38 kDa subunit (bchI), found in Rhodobacter capsulatus (strain ATCC BAA-309 / NBRC 16581 / SB1003).